A 256-amino-acid chain; its full sequence is Cell division protein FtsQ (256 aa).

The Cytoplasmic segment spans residues 1-23; that stretch reads MIKAVKMNTSFDKEKVRKHLPGA. Residues 24-44 form a helical membrane-spanning segment; the sequence is IFLSLVVITSLWLVISTISWM. The Periplasmic segment spans residues 45-256; it reads TDEDRLPLSH…SDDVENKEEN (212 aa). Residues 50–120 enclose the POTRA domain; the sequence is LPLSHMIIQG…ETIKVFVVEH (71 aa).

This sequence belongs to the FtsQ/DivIB family. FtsQ subfamily. In terms of assembly, part of a complex composed of FtsB, FtsL and FtsQ.

It localises to the cell inner membrane. Essential cell division protein. May link together the upstream cell division proteins, which are predominantly cytoplasmic, with the downstream cell division proteins, which are predominantly periplasmic. May control correct divisome assembly. The chain is Cell division protein FtsQ from Aliivibrio fischeri (strain ATCC 700601 / ES114) (Vibrio fischeri).